The following is a 421-amino-acid chain: Protein HOMOLOG OF MAMMALIAN LYST-INTERACTING PROTEIN 5 (421 aa).

S2 bears the N-acetylserine mark. Residues 146 to 374 form a disordered region; it reads IKEGRKPTPG…KYHYDSSYQP (229 aa). Polar residues predominate over residues 165-185; it reads SIPSSGPSGSYDHSASDTNTT. The span at 188–207 shows a compositional bias: basic and acidic residues; the sequence is HRTELDPPHDSNDDSSHHQF. The segment covering 245 to 258 has biased composition (pro residues); sequence LPPPTGPSDSPYPH. The segment covering 278–293 has biased composition (polar residues); that stretch reads NYSSHEPSPNSLPNFQ. 2 stretches are compositionally biased toward low complexity: residues 294-308 and 317-337; these read SYPSFSESSLPSTSP and PEPYYSSPHSAPAPSSTSFSS.

The protein belongs to the VTA1 family. Homodimer. Interacts with SKD1/VPS4, VPS60-1, CHMP1A and CHMP1B. Binds to PROS/At4g24370. Interacts with MPK6 and MPK3. In terms of processing, phosphorylated by activated MPK6 and MPK3, this activation is required to trigger multivesicular bodies (MVBs) trafficking upon plant infection.

The protein localises to the cytoplasm. It localises to the endosome membrane. The protein resides in the nucleus. It is found in the endosome. Its subcellular location is the multivesicular body. Functionally, involved in the endosomal multivesicular bodies (MVB) pathway. MVBs contain intraluminal vesicles (ILVs) that are generated by invagination and scission from the limiting membrane of the endosome and are delivered to lysosomes enabling degradation of membrane proteins. Thought to be a cofactor of SKD1/VPS4, which catalyzes the disassembly of membrane-associated ESCRT-III. Target of pathogen-responsive mitogen-activated protein kinases (MPKs) that plays a critical role in plant basal resistance to Pseudomonas syringae in a SKD1-dependent manner by promoting multivesicular bodies (MVBs) trafficking upon plant infection. This chain is Protein HOMOLOG OF MAMMALIAN LYST-INTERACTING PROTEIN 5, found in Arabidopsis thaliana (Mouse-ear cress).